A 214-amino-acid polypeptide reads, in one-letter code: Glutathione S-transferase F12 (214 aa).

The GST N-terminal domain maps to 2 to 82; it reads VVKLYGQVTA…YYATKFADQG (81 aa). Residues 11 to 12, 40 to 41, 53 to 54, and 66 to 67 contribute to the glutathione site; these read AA, QK, QV, and ES. The GST C-terminal domain occupies 89–214; that stretch reads SLEHRAIVDQ…WKKLMVLAGH (126 aa).

The protein belongs to the GST superfamily. Phi family.

It localises to the cytoplasm. The protein localises to the cytosol. It carries out the reaction RX + glutathione = an S-substituted glutathione + a halide anion + H(+). In terms of biological role, involved in the transport and/or accumulation of both anthocyanins and proanthocyanidins (PA)s in the vacuole. Functions in the cytosol to maintain the regular accumulation in the vacuole of PA precursors, such as epicatechin and glycosylated epicatechin. The sequence is that of Glutathione S-transferase F12 from Arabidopsis thaliana (Mouse-ear cress).